Reading from the N-terminus, the 203-residue chain is Akirin-2 (203 aa).

A phosphoserine mark is found at S18 and S21. The short motif at 22 to 27 is the Nuclear localization signal element; it reads PKRRRC. Phosphoserine is present on S57. The SYVS motif motif lies at 200–203; sequence SYVS.

The protein belongs to the akirin family. In terms of assembly, homodimer. Interacts with IPO9; the interaction is direct. Associates with 20S and 26S proteasomes. Interacts with SMARCD1; promoting SWI/SNF complex recruitment. Interacts with NFKBIZ. Interacts with YWHAB. Polyubiquitinated. Polyubiquitination is dependent of UBR5 that extends pre-ubiquitinated AKIRIN2. In terms of tissue distribution, widely expressed. Most abundant in the lung, followed by the skeletal muscle, heart, liver, fat, thymus, lymph node, small intestine, kidney and spleen. In skeletal muscle, expressed at higher level in fast extensor digitorum longus (EDL) and longissimus lumborum (LL) muscles than in slow soleus (SOL) muscles.

It is found in the nucleus. The protein resides in the cytoplasm. Its subcellular location is the membrane. Functionally, molecular adapter that acts as a bridge between a variety of multiprotein complexes, and which is involved in embryonic development, immunity, myogenesis and brain development. Plays a key role in nuclear protein degradation by promoting import of proteasomes into the nucleus: directly binds to fully assembled 20S proteasomes at one end and to nuclear import receptor IPO9 at the other end, bridging them together and mediating the import of pre-assembled proteasome complexes through the nuclear pore. Involved in innate immunity by regulating the production of interleukin-6 (IL6) downstream of Toll-like receptor (TLR): acts by bridging the NF-kappa-B inhibitor NFKBIZ and the SWI/SNF complex, leading to promote induction of IL6. Also involved in adaptive immunity by promoting B-cell activation. Involved in brain development: required for the survival and proliferation of cerebral cortical progenitor cells. Involved in myogenesis: required for skeletal muscle formation and skeletal development, possibly by regulating expression of muscle differentiation factors. The protein is Akirin-2 of Sus scrofa (Pig).